Consider the following 324-residue polypeptide: Rho crystallin (324 aa).

T2 is modified (N-acetylthreonine). Residue 218–281 coordinates NADP(+); it reads SVLGSHRDRN…SFTPARIKQN (64 aa).

Belongs to the aldo/keto reductase family. Monomer.

In Rana temporaria (European common frog), this protein is Rho crystallin.